We begin with the raw amino-acid sequence, 221 residues long: Thiamine-phosphate synthase (221 aa).

4-amino-2-methyl-5-(diphosphooxymethyl)pyrimidine contacts are provided by residues 39–43 (QLRCK) and Asn76. Positions 77 and 96 each coordinate Mg(2+). A 4-amino-2-methyl-5-(diphosphooxymethyl)pyrimidine-binding site is contributed by Ser114. Residue 140-142 (TPT) coordinates 2-[(2R,5Z)-2-carboxy-4-methylthiazol-5(2H)-ylidene]ethyl phosphate. Lys143 provides a ligand contact to 4-amino-2-methyl-5-(diphosphooxymethyl)pyrimidine. Gly171 is a 2-[(2R,5Z)-2-carboxy-4-methylthiazol-5(2H)-ylidene]ethyl phosphate binding site.

Belongs to the thiamine-phosphate synthase family. Mg(2+) serves as cofactor.

The enzyme catalyses 2-[(2R,5Z)-2-carboxy-4-methylthiazol-5(2H)-ylidene]ethyl phosphate + 4-amino-2-methyl-5-(diphosphooxymethyl)pyrimidine + 2 H(+) = thiamine phosphate + CO2 + diphosphate. The catalysed reaction is 2-(2-carboxy-4-methylthiazol-5-yl)ethyl phosphate + 4-amino-2-methyl-5-(diphosphooxymethyl)pyrimidine + 2 H(+) = thiamine phosphate + CO2 + diphosphate. It catalyses the reaction 4-methyl-5-(2-phosphooxyethyl)-thiazole + 4-amino-2-methyl-5-(diphosphooxymethyl)pyrimidine + H(+) = thiamine phosphate + diphosphate. The protein operates within cofactor biosynthesis; thiamine diphosphate biosynthesis; thiamine phosphate from 4-amino-2-methyl-5-diphosphomethylpyrimidine and 4-methyl-5-(2-phosphoethyl)-thiazole: step 1/1. In terms of biological role, condenses 4-methyl-5-(beta-hydroxyethyl)thiazole monophosphate (THZ-P) and 2-methyl-4-amino-5-hydroxymethyl pyrimidine pyrophosphate (HMP-PP) to form thiamine monophosphate (TMP). The chain is Thiamine-phosphate synthase from Deinococcus geothermalis (strain DSM 11300 / CIP 105573 / AG-3a).